The primary structure comprises 415 residues: uncharacterized protein (415 aa).

Disordered stretches follow at residues 329-351 (KFNKPNNDDLQNESGDDSETESS) and 388-415 (KSMMNKSESNKKSNRKSNKRSNKNIITL). Residues 338–348 (LQNESGDDSET) show a composition bias toward acidic residues. The span at 399–409 (KSNRKSNKRSN) shows a compositional bias: basic residues.

This is an uncharacterized protein from Acanthamoeba polyphaga mimivirus (APMV).